The primary structure comprises 405 residues: MAAVVQNVVKLLGEQYYRDAMEQCHNYNARLCAERSVRLPFLDSQTGVAQSNCYIWMEKRHRGPGLAAGQLYSYPARRWRKKRRAHPPEDPRLSFPSIKPDTDQTLKKEGLISQDGSSLEALLRTDPLEKRSLPDPRMDDDSLGEFPVTNSRARKRILEPDDFLDDLDDEDYEEDTPKRRGKGKAKGKGVGGARKKLDAAILEDRDKPYACDNSYKQKHSLKPPDRVCGKRYKNRPGLSYHYAHSHLAEEEGDDKDDSQPPTPVSQRSEEQKSKKGPDGLALPNNYCDFCLGDSKINKKTGQPEELVSCSDCGRSGHPSCLQFTPVMMAAVKTYRWQCIECKCCNICGTSENDDQLLFCDDCDRGYHMYCLTPPMSEPPEGSWSCHLCLDLLKEKASIYQNQNNS.

4 disordered regions span residues 80–147 (RKKR…GEFP), 165–194 (DDLDDEDYEEDTPKRRGKGKAKGKGVGGAR), 210–230 (ACDNSYKQKHSLKPPDRVCGK), and 248–280 (AEEEGDDKDDSQPPTPVSQRSEEQKSKKGPDGL). Basic and acidic residues-rich tracts occupy residues 100–110 (PDTDQTLKKEG) and 126–140 (DPLEKRSLPDPRMDD). The span at 165 to 174 (DDLDDEDYEE) shows a compositional bias: acidic residues. Residues 209–246 (YACDNSYKQKHSLKPPDRVCGKRYKNRPGLSYHYAHSH) form a C2H2-type; atypical zinc finger. The segment covering 267–277 (RSEEQKSKKGP) has biased composition (basic and acidic residues). PHD-type zinc fingers lie at residues 284-344 (NNYC…CKCC) and 341-391 (CKCC…CLDL).

Belongs to the requiem/DPF family.

The protein resides in the cytoplasm. It localises to the nucleus. In terms of biological role, may be a transcription factor required for the apoptosis response following survival factor withdrawal from myeloid cells. Might also have a role in the development and maturation of lymphoid cells. This chain is Zinc finger protein ubi-d4 (REQ), found in Gallus gallus (Chicken).